We begin with the raw amino-acid sequence, 155 residues long: Arginine repressor (155 aa).

It belongs to the ArgR family.

It is found in the cytoplasm. It functions in the pathway amino-acid biosynthesis; L-arginine biosynthesis [regulation]. Functionally, regulates arginine biosynthesis genes. This Histophilus somni (strain 2336) (Haemophilus somnus) protein is Arginine repressor.